The sequence spans 171 residues: Protein ups1 homolog (171 aa).

The segment at 1 to 79 is required for mitochondrial targeting; the sequence is MTAICTDKTE…LNVNKSYILE (79 aa). A PRELI/MSF1 domain is found at 2-171; it reads TAICTDKTEL…YVIQQKFQPS (170 aa).

Its subcellular location is the mitochondrion inner membrane. The protein localises to the mitochondrion intermembrane space. Required for maintenance of normal mitochondrial morphology as well as PCP1-dependent processing of MGM1. The sequence is that of Protein ups1 homolog from Schizosaccharomyces pombe (strain 972 / ATCC 24843) (Fission yeast).